The following is a 367-amino-acid chain: Alanine racemase (367 aa).

The active-site Proton acceptor; specific for D-alanine is the lysine 40. Lysine 40 bears the N6-(pyridoxal phosphate)lysine mark. Arginine 136 contributes to the substrate binding site. Residue tyrosine 263 is the Proton acceptor; specific for L-alanine of the active site. Residue methionine 310 participates in substrate binding.

Belongs to the alanine racemase family. It depends on pyridoxal 5'-phosphate as a cofactor.

It carries out the reaction L-alanine = D-alanine. It functions in the pathway amino-acid biosynthesis; D-alanine biosynthesis; D-alanine from L-alanine: step 1/1. Catalyzes the interconversion of L-alanine and D-alanine. May also act on other amino acids. This chain is Alanine racemase (alr), found in Lactococcus lactis subsp. cremoris (strain SK11).